Reading from the N-terminus, the 118-residue chain is DNA-binding protein inhibitor ID-3 (118 aa).

The 53-residue stretch at 32–84 (SHKGPGVDEPMGLLYDMNGCYSKLKELVPGIPQGSKLSQVEILQHVIDYIFDL) folds into the bHLH domain.

Homodimer. Heterodimer with other HLH proteins. Interacts (via HLH domain) with the bHLH protein hes4/hairy2 (via Orange domain). Interacts with stat3.

The protein resides in the nucleus. Functionally, transcriptional regulator (lacking a basic DNA binding domain) which negatively regulates the basic helix-loop-helix (bHLH) transcription factors by forming heterodimers and inhibiting their DNA binding and transcriptional activity. Influences cell fate decisions in the embryo by sequestering and blocking the activity of the bHLH transcription factors that control these decisions. Inhibits the binding of myogenic bHLH-containing complexes to E-box DNA, thereby preventing activation of muscle-specific target genes. Also inhibits the activity of neurogenic factor neurod1/neuroD. Plays a role in cell cycle progression and survival of neural crest progenitors; binding to either hes4-B/hairy2b or stat3 blocks the formation of transcription factor complexes and the repressor function of hes4-B/hairy2B, to allow neural crest progenitors to differentiate. May play a role in the regulation of the circadian rhythm. This chain is DNA-binding protein inhibitor ID-3 (id3), found in Xenopus tropicalis (Western clawed frog).